The chain runs to 152 residues: Small ribosomal subunit protein bS6 (152 aa).

This sequence belongs to the bacterial ribosomal protein bS6 family.

Binds together with bS18 to 16S ribosomal RNA. The chain is Small ribosomal subunit protein bS6 from Bdellovibrio bacteriovorus (strain ATCC 15356 / DSM 50701 / NCIMB 9529 / HD100).